The primary structure comprises 598 residues: Mitochondrial distribution and morphology protein 30 (598 aa).

One can recognise an F-box domain in the interval 13 to 59; that stretch reads SFTIDHLPPEIWLCISKLVGTSDLHNLCLINRRLYLTITSDEIWKRR.

In terms of assembly, interacts with SKP1. Component of the probable SCF(MDM30) complex containing CDC53, SKP1, RBX1 and MDM30. Interacts with SKP1 and FZO1.

The protein resides in the cytoplasm. It is found in the mitochondrion. The protein operates within protein modification; protein ubiquitination. In terms of biological role, substrate recognition component of a SCF (SKP1-CUL1-F-box protein) E3 ubiquitin-protein ligase complex which mediates the ubiquitination and subsequent proteasomal degradation of target proteins. Probably recognizes and binds to phosphorylated target proteins. Recognizes FZO1 and regulates the amount of FZO1. Regulatory factor for the mitochondrial fusion machinery. Required for mitochondrial DNA maintenance. The chain is Mitochondrial distribution and morphology protein 30 (MDM30) from Saccharomyces cerevisiae (strain ATCC 204508 / S288c) (Baker's yeast).